The sequence spans 125 residues: Small ribosomal subunit protein uS12c (125 aa).

It belongs to the universal ribosomal protein uS12 family. In terms of assembly, part of the 30S ribosomal subunit.

It is found in the plastid. The protein resides in the chloroplast. In terms of biological role, with S4 and S5 plays an important role in translational accuracy. Located at the interface of the 30S and 50S subunits. This is Small ribosomal subunit protein uS12c (rps12) from Oltmannsiellopsis viridis (Marine flagellate).